A 1349-amino-acid polypeptide reads, in one-letter code: Adhesion G protein-coupled receptor F5 (1349 aa).

A signal peptide spans 1 to 24; that stretch reads MKSSRTVTLYFVLIVICSSEATWS. At 25–1016 the chain is on the extracellular side; the sequence is RPAEPIVHPL…PGSLLKILLD (992 aa). Residues N73, N94, N185, N254, N270, N286, N299, N326, N337, N349, N396, N470, N503, N538, N649, and N666 are each glycosylated (N-linked (GlcNAc...) asparagine). The 109-residue stretch at 163–271 folds into the SEA domain; the sequence is PETYITLKIK…NSFQGTPSNE (109 aa). Ig-like domains are found at residues 268–366, 367–464, and 469–559; these read PSNE…LDVT, PIRI…IAVT, and ANLT…KDVT. A disulfide bond links C291 and C348. A disulfide bridge links C389 with C447. Cysteines 490 and 543 form a disulfide. The residue at position 819 (S819) is a Phosphoserine. N-linked (GlcNAc...) asparagine glycans are attached at residues N820, N958, and N963. Residues 842 to 1006 enclose the GAIN-B domain; it reads TPPFLFHPNV…SILMSPDSPD (165 aa). 2 cysteine pairs are disulfide-bonded: C954/C988 and C973/C990. A GPS region spans residues 954–1006; it reads CVFWNFSLANNTGGWDSSGCTVEDDGRDNRDRVFCKCNHLTSFSILMSPDSPD. The tethered agonist stretch occupies residues 994 to 1009; sequence TSFSILMSPDSPDPGS. A helical membrane pass occupies residues 1017 to 1036; sequence IISYIGLGFSIVSLAACLVV. The Cytoplasmic segment spans residues 1037 to 1055; sequence EAMVWKSVTKNRTSYMRHI. Residues 1056-1078 form a helical membrane-spanning segment; the sequence is CIVNIALCLLIADIWFIVAGAIH. The Extracellular segment spans residues 1079–1097; it reads DGHYPLNETACVAATFFIH. The N-linked (GlcNAc...) asparagine glycan is linked to N1085. Residues 1098–1120 form a helical membrane-spanning segment; sequence FFYLSVFFWMLTLGLMLFYRLIF. The Cytoplasmic segment spans residues 1121–1131; it reads ILHDASKSTQK. The chain crosses the membrane as a helical span at residues 1132–1154; it reads AIAFSLGYGCPLIISSITVGVTQ. Residues 1155–1173 lie on the Extracellular side of the membrane; the sequence is PQEVYMRKNACWLNWEDTR. The helical transmembrane segment at 1174 to 1196 threads the bilayer; the sequence is ALLAFAIPALIIVVVNVSITVVV. The Cytoplasmic portion of the chain corresponds to 1197–1216; sequence ITKILRPSVGDKPGKQEKSS. A helical transmembrane segment spans residues 1217 to 1239; the sequence is LFQISKSIGVLTPLLGLTWGFGL. The Extracellular portion of the chain corresponds to 1240–1248; it reads ATVIQGSNA. Residues 1249 to 1271 traverse the membrane as a helical segment; it reads VFHIIFTLLNAFQGLFILLFGCL. Residues 1272 to 1349 lie on the Cytoplasmic side of the membrane; it reads WDQKVQEALL…NSSSAYSLLN (78 aa). Phosphothreonine is present on T1303. Phosphoserine is present on S1310. Positions 1329–1343 are enriched in low complexity; the sequence is STPETTSSSVENSSS. Residues 1329-1349 are disordered; the sequence is STPETTSSSVENSSSAYSLLN.

Belongs to the G-protein coupled receptor 2 family. Adhesion G-protein coupled receptor (ADGR) subfamily. As to quaternary structure, homodimer; disulfide-linked. Heterodimer of 2 chains generated by proteolytic processing; the large extracellular N-terminal fragment and the membrane-bound C-terminal fragment predominantly remain associated and non-covalently linked. Fragment generates by the processing enzyme furin remains attached to the extracellular N-terminal fragment. Interacts (via N-terminal extracellular domain) with SFTPD. Post-translationally, highly glycosylated. In terms of processing, proteolytically cleaved at multiple sites: one in the GPS region of the GAIN-B domain (S1 site) and the other in the SEA domain (S2 site). The proteolytic cleavage at S1 site generates an extracellular subunit and a seven-transmembrane subunit. The proteolytic cleavage at S2 site generates a fragment that undergoes proteolytic cleavage by the processing enzyme furin. As to expression, highly expressed in the lung and to a much lesser extent in the kidney and heart. Dense localization in alveolar walls of the lung and in the intercalated cells of the collecting duct of the kidney.

The protein localises to the cell membrane. As an adhesion G protein-coupled receptor (aGPCR) exhibits a large N-terminal extracellular domain containing highly conserved GPCR autoproteolysis-inducing (GAIN) domain. During synthesis, intracellular autoproteolytic processing of nascent chain within the GAIN domain generates a mature protein, consisting of an N-terminal fragment that is non-covalently linked to the C-terminal fragment. The mature protein is routed to the plasma membrane where the N- and C-terminal fragments remain associated, forming the holoreceptor. Dissociation of the aGPCR fragments stimulates G protein signaling through the action of the tethered-peptide agonist stalk that is occluded within the GAIN domain in the holoreceptor form. This dissociation might be induced by ligand binding, such as that of sFNDC4. In terms of biological role, receptor that plays a critical role in lung surfactant homeostasis. May play a role in controlling adipocyte function. Adhesion G protein-coupled receptor. In alveolar type II (ATII or AT2) cells, required for normal lung surfactant homeostasis. Modulation of both surfactant secretion and uptake by ATII cells is mediated by the downstream activation of GNAQ/GNA11 proteins and may be a consequence of increased cortical F-actin assembly induced by ADGRF5 activation. In the kidney, may play a role in the regulation of acid excretion into the primary urine, possibly by regulating the surface expression of V-ATPase proton pump. As a receptor for soluble FNDC4 (sFNDC4), required for proper systemic glucose tolerance, specifically sensitizing white adipose tissue to insulin. Also plays a role in sFNDC4-induced decrease of local inflammation in white adipose tissue. This chain is Adhesion G protein-coupled receptor F5 (Adgrf5), found in Rattus norvegicus (Rat).